The chain runs to 377 residues: NADP-dependent oxidoreductase lnbE (377 aa).

Residues 170 to 173 (GGNG), 257 to 263 (LTNPRVS), and 293 to 295 (SPV) contribute to the NADP(+) site.

Belongs to the NADP-dependent oxidoreductase L4BD family.

Its pathway is secondary metabolite biosynthesis. NADP-dependent oxidoreductase; part of the lnb gene cluster that mediates the biosynthesis of diastereomeric piperazines. Lna and lnb clusters encode sets of enzymes that produce overlapping sets of previously undescribed metabolites such as piperazinomycin-like metabolites or morpholine. The lna and lnb biosynthetic pathways appear to be part of a signaling network that controls the formation of sclerotia, a resilient overwintering structure. One primary function of the non-canonical nonribosomal peptide synthetases lnaA and lnbA consists in the reduction of L-tyrosine. The presence in the clusters of tailoring enzymes such as the oxidoreductases lnaB, lnbB, lnaE or lnbE, as well as of the cytochrome P450 monooxygenases lnaC, lnaD, or lnbC, might explain formation of various diastereomeric piperazines. The chain is NADP-dependent oxidoreductase lnbE from Aspergillus flavus (strain ATCC 200026 / FGSC A1120 / IAM 13836 / NRRL 3357 / JCM 12722 / SRRC 167).